The sequence spans 344 residues: Isopentenyl-diphosphate delta-isomerase (344 aa).

Residue 9-10 participates in substrate binding; that stretch reads RK. Residues 65-67, serine 95, and asparagine 124 each bind FMN; that span reads AMT. Glutamine 154 serves as a coordination point for substrate. Residue glutamate 155 coordinates Mg(2+). FMN contacts are provided by residues lysine 185, threonine 215, 259-261, and 280-281; these read GVR and SG.

This sequence belongs to the IPP isomerase type 2 family. In terms of assembly, homooctamer. Dimer of tetramers. FMN serves as cofactor. The cofactor is NADPH. Requires Mg(2+) as cofactor.

The protein resides in the cytoplasm. It catalyses the reaction isopentenyl diphosphate = dimethylallyl diphosphate. Involved in the biosynthesis of isoprenoids. Catalyzes the 1,3-allylic rearrangement of the homoallylic substrate isopentenyl (IPP) to its allylic isomer, dimethylallyl diphosphate (DMAPP). This is Isopentenyl-diphosphate delta-isomerase from Lacticaseibacillus paracasei (strain ATCC 334 / BCRC 17002 / CCUG 31169 / CIP 107868 / KCTC 3260 / NRRL B-441) (Lactobacillus paracasei).